A 295-amino-acid chain; its full sequence is Bifunctional protein FolD (295 aa).

NADP(+) contacts are provided by residues 169–171, Ser-194, and Ile-235; that span reads GRS.

The protein belongs to the tetrahydrofolate dehydrogenase/cyclohydrolase family. In terms of assembly, homodimer.

The catalysed reaction is (6R)-5,10-methylene-5,6,7,8-tetrahydrofolate + NADP(+) = (6R)-5,10-methenyltetrahydrofolate + NADPH. The enzyme catalyses (6R)-5,10-methenyltetrahydrofolate + H2O = (6R)-10-formyltetrahydrofolate + H(+). Its pathway is one-carbon metabolism; tetrahydrofolate interconversion. Functionally, catalyzes the oxidation of 5,10-methylenetetrahydrofolate to 5,10-methenyltetrahydrofolate and then the hydrolysis of 5,10-methenyltetrahydrofolate to 10-formyltetrahydrofolate. The sequence is that of Bifunctional protein FolD from Acaryochloris marina (strain MBIC 11017).